The chain runs to 810 residues: Probable inorganic carbon transporter subunit DabA (810 aa).

Zn(2+) contacts are provided by cysteine 347, aspartate 349, histidine 509, and cysteine 524.

Belongs to the inorganic carbon transporter (TC 9.A.2) DabA family. Forms a complex with DabB. Zn(2+) serves as cofactor.

The protein resides in the cell inner membrane. Functionally, part of an energy-coupled inorganic carbon pump. This is Probable inorganic carbon transporter subunit DabA from Marinomonas sp. (strain MWYL1).